The sequence spans 79 residues: Putative defensin-like protein 80 (79 aa).

The signal sequence occupies residues 1 to 26 (MDVQRSSYIFIALSIIAMFLITGVKP). 4 disulfides stabilise this stretch: C32–C65, C36–C58, C44–C63, and C48–C64.

Belongs to the DEFL family.

The protein localises to the secreted. The protein is Putative defensin-like protein 80 (LCR81) of Arabidopsis thaliana (Mouse-ear cress).